The following is a 652-amino-acid chain: Threonine--tRNA ligase (652 aa).

The TGS domain maps to 1-61 (MIKLKLPDGS…DRDAEVEIVT (61 aa)). The catalytic stretch occupies residues 243–548 (DHRKIGREMD…LIENYEGRFP (306 aa)). Positions 348, 399, and 525 each coordinate Zn(2+).

It belongs to the class-II aminoacyl-tRNA synthetase family. Homodimer. The cofactor is Zn(2+).

The protein localises to the cytoplasm. It carries out the reaction tRNA(Thr) + L-threonine + ATP = L-threonyl-tRNA(Thr) + AMP + diphosphate + H(+). Its function is as follows. Catalyzes the attachment of threonine to tRNA(Thr) in a two-step reaction: L-threonine is first activated by ATP to form Thr-AMP and then transferred to the acceptor end of tRNA(Thr). Also edits incorrectly charged L-seryl-tRNA(Thr). The protein is Threonine--tRNA ligase of Parvibaculum lavamentivorans (strain DS-1 / DSM 13023 / NCIMB 13966).